The following is a 420-amino-acid chain: DNA primase small subunit (420 aa).

Met1 carries the post-translational modification N-acetylmethionine. Residues Glu44, Asp109, and Asp111 contribute to the active site. The Mg(2+) site is built by Asp109 and Asp111. The Mn(2+) site is built by Asp109 and Asp111. 109-111 provides a ligand contact to a ribonucleoside 5'-triphosphate; it reads DID. Residues Cys121, Cys122, Cys128, and Cys131 each contribute to the Zn(2+) site. The Zinc knuckle motif motif lies at 121–131; it reads CCSSADICPKC. Residue 160 to 166 coordinates a ribonucleoside 5'-triphosphate; sequence SGRRGVH. Asp306 is a binding site for Mg(2+). Asp306 contacts Mn(2+). A ribonucleoside 5'-triphosphate contacts are provided by residues 315–318 and His324; that span reads HLLK. Residues 363 to 373 are compositionally biased toward acidic residues; that stretch reads NEEEKEENEAE. The disordered stretch occupies residues 363 to 382; sequence NEEEKEENEAESDVKHRTRD.

Belongs to the eukaryotic-type primase small subunit family. In terms of assembly, heterodimer of a catalytic subunit PRIM1 and a regulatory subunit PRIM2, also known as the DNA primase complex. Interacts with PRIM2 (via C-terminus). Component of the alpha DNA polymerase complex (also known as the alpha DNA polymerase-primase complex) consisting of four subunits: the catalytic subunit POLA1, the regulatory subunit POLA2, and the primase complex subunits PRIM1 and PRIM2 respectively. Within the complex, POLA1 directly interacts with PRIM2. Mg(2+) serves as cofactor. The cofactor is Mn(2+).

It carries out the reaction ssDNA + n NTP = ssDNA/pppN(pN)n-1 hybrid + (n-1) diphosphate.. Its activity is regulated as follows. The presence of the regulatory subunit PRIM2/p58 accelerates the kinetics of initiation and primer extension. Inhibited by arabinose nucleoside derivatives such as fludarabine and vidarabine. Catalytic subunit of the DNA primase complex and component of the DNA polymerase alpha complex (also known as the alpha DNA polymerase-primase complex - primosome/replisome) which play an essential role in the initiation of DNA synthesis. During the S phase of the cell cycle, the DNA polymerase alpha complex (composed of a catalytic subunit POLA1, an accessory subunit POLA2 and two primase subunits, the catalytic subunit PRIM1 and the regulatory subunit PRIM2) is recruited to DNA at the replicative forks via direct interactions with MCM10 and WDHD1. The primase subunit of the polymerase alpha complex initiates DNA synthesis by oligomerising short RNA primers on both leading and lagging strands. These primers are initially extended by the polymerase alpha catalytic subunit and subsequently transferred to polymerase delta and polymerase epsilon for processive synthesis on the lagging and leading strand, respectively. In the primase complex, both subunits are necessary for the initial di-nucleotide formation, but the extension of the primer depends only on the catalytic subunit. Synthesizes 9-mer RNA primers (also known as the 'unit length' RNA primers). Incorporates only ribonucleotides in the presence of ribo- and deoxy-nucleotide triphosphates (rNTPs, dNTPs). Requires template thymine or cytidine to start the RNA primer synthesis, with an adenine or guanine at its 5'-end. Binds single stranded DNA. This chain is DNA primase small subunit (PRIM1), found in Homo sapiens (Human).